The sequence spans 567 residues: Urease subunit alpha (567 aa).

Positions 128–567 (GGVDTHVHYI…LPLAQRYHLF (440 aa)) constitute a Urease domain. Ni(2+) contacts are provided by histidine 133, histidine 135, and lysine 216. Residue lysine 216 is modified to N6-carboxylysine. Residue histidine 218 participates in substrate binding. Ni(2+)-binding residues include histidine 245 and histidine 271. Histidine 319 (proton donor) is an active-site residue. Position 359 (aspartate 359) interacts with Ni(2+).

This sequence belongs to the metallo-dependent hydrolases superfamily. Urease alpha subunit family. As to quaternary structure, heterotrimer of UreA (gamma), UreB (beta) and UreC (alpha) subunits. Three heterotrimers associate to form the active enzyme. Ni cation serves as cofactor. Carboxylation allows a single lysine to coordinate two nickel ions.

It localises to the cytoplasm. The catalysed reaction is urea + 2 H2O + H(+) = hydrogencarbonate + 2 NH4(+). It functions in the pathway nitrogen metabolism; urea degradation; CO(2) and NH(3) from urea (urease route): step 1/1. The polypeptide is Urease subunit alpha (Pseudoalteromonas translucida (strain TAC 125)).